The primary structure comprises 84 residues: Small ribosomal subunit protein eS27 (84 aa).

Basic and acidic residues predominate over residues 1–16; the sequence is MPLAKDLLHPSPEEEK. The segment at 1–23 is disordered; sequence MPLAKDLLHPSPEEEKRKHKKKR. Serine 11 is subject to Phosphoserine. Residues 38 to 60 form a C4-type zinc finger; sequence PGCYKITTVFSHAQTVVLCVGCS.

It belongs to the eukaryotic ribosomal protein eS27 family. Component of the small ribosomal subunit. Part of the small subunit (SSU) processome, composed of more than 70 proteins and the RNA chaperone small nucleolar RNA (snoRNA) U3. Zn(2+) is required as a cofactor.

The protein localises to the cytoplasm. Its subcellular location is the nucleus. It localises to the nucleolus. Its function is as follows. Component of the small ribosomal subunit. The ribosome is a large ribonucleoprotein complex responsible for the synthesis of proteins in the cell. Required for proper rRNA processing and maturation of 18S rRNAs. Part of the small subunit (SSU) processome, first precursor of the small eukaryotic ribosomal subunit. During the assembly of the SSU processome in the nucleolus, many ribosome biogenesis factors, an RNA chaperone and ribosomal proteins associate with the nascent pre-rRNA and work in concert to generate RNA folding, modifications, rearrangements and cleavage as well as targeted degradation of pre-ribosomal RNA by the RNA exosome. The polypeptide is Small ribosomal subunit protein eS27 (Mus musculus (Mouse)).